Consider the following 226-residue polypeptide: Leucyl/phenylalanyl-tRNA--protein transferase (226 aa).

Belongs to the L/F-transferase family.

Its subcellular location is the cytoplasm. The enzyme catalyses N-terminal L-lysyl-[protein] + L-leucyl-tRNA(Leu) = N-terminal L-leucyl-L-lysyl-[protein] + tRNA(Leu) + H(+). It carries out the reaction N-terminal L-arginyl-[protein] + L-leucyl-tRNA(Leu) = N-terminal L-leucyl-L-arginyl-[protein] + tRNA(Leu) + H(+). It catalyses the reaction L-phenylalanyl-tRNA(Phe) + an N-terminal L-alpha-aminoacyl-[protein] = an N-terminal L-phenylalanyl-L-alpha-aminoacyl-[protein] + tRNA(Phe). In terms of biological role, functions in the N-end rule pathway of protein degradation where it conjugates Leu, Phe and, less efficiently, Met from aminoacyl-tRNAs to the N-termini of proteins containing an N-terminal arginine or lysine. The chain is Leucyl/phenylalanyl-tRNA--protein transferase from Pseudomonas aeruginosa (strain ATCC 15692 / DSM 22644 / CIP 104116 / JCM 14847 / LMG 12228 / 1C / PRS 101 / PAO1).